The following is a 404-amino-acid chain: Adenylosuccinate synthetase (404 aa).

GTP is bound by residues 12–18 (GDEGKGK) and 40–42 (GHT). D13 (proton acceptor) is an active-site residue. Mg(2+)-binding residues include D13 and G40. Residues 13-16 (DEGK), 38-41 (NAGH), T121, R135, Q213, T228, and R296 contribute to the IMP site. H41 acts as the Proton donor in catalysis. 292–298 (TTTGRAR) serves as a coordination point for substrate. Residues R298, 324 to 326 (KMD), and 389 to 391 (SCG) contribute to the GTP site.

The protein belongs to the adenylosuccinate synthetase family. Homodimer. Mg(2+) serves as cofactor.

The protein localises to the cytoplasm. It carries out the reaction IMP + L-aspartate + GTP = N(6)-(1,2-dicarboxyethyl)-AMP + GDP + phosphate + 2 H(+). Its pathway is purine metabolism; AMP biosynthesis via de novo pathway; AMP from IMP: step 1/2. Plays an important role in the de novo pathway of purine nucleotide biosynthesis. Catalyzes the first committed step in the biosynthesis of AMP from IMP. This is Adenylosuccinate synthetase from Deinococcus geothermalis (strain DSM 11300 / CIP 105573 / AG-3a).